A 56-amino-acid polypeptide reads, in one-letter code: Large ribosomal subunit protein bL33 (56 aa).

It belongs to the bacterial ribosomal protein bL33 family.

The chain is Large ribosomal subunit protein bL33 (rpmG) from Rickettsia prowazekii (strain Madrid E).